Consider the following 715-residue polypeptide: MSGSKKKKITKADRLKQILEEEEKRQKEEEEARVKYEKEEMERLEIQRIENEKLQKLEAKDLERRNEELEELYLLEACFPEAEKLKRDNRFLSQWKHYIECDGSPDPSIAQEINTFITLWKEETNETLEEVIEKSKLVLNLIEKLKLILLETPPYDLQGKNIIQYQESILELQELLHLKFNRATEILLRQASTLADLDSGNMEKVIQDENVTLYIWANLKKNPRHRSIRFSETQTGFEIPRILATSDIALRLLHTHYDHVTPLSPVLTPSQEHISIVTDFVKEEVKSVQTAVSKDLQEENKQENESNSVHEEETKAEGQGDVEEQMCPVQEEPEATKYEMEMKLLSETVSAAQELLLENASEKPYFLEENEVDLCQFTTLGGVYHLDILELPPQCKPMKGWMIVEILKEGLQKYTYPPETTEDLEAENVFPPIEVTLEVHENVIFFENPMVARWDAEGKQWKTDGISNVSYKSEERLITFNLETFCPVTLIQDAHINMPYQSWELRPLDVNKVLLTITTVFTELQIQIKENLCMLASIKVNNKNHSSILEEKWMTPVSFIIALKKAGLNIFPTGHSHLYVVINYKHPSVEVKAYRQMALLSSAFAFCWSKWNTACESKKTVFQVREHLLKEEPIRNPNWTLLMFSGDRAQSLKINESSDAFSEALKEETEFHSTLYHMVKDFASQEAMRAVRRSNCQFVDSVCHMLLSTRLLSYS.

The segment at alanine 291 to valine 322 is disordered. The span at aspartate 295–glycine 318 shows a compositional bias: basic and acidic residues.

It belongs to the DNAI7 family. In terms of assembly, part of the multisubunit axonemal dynein complex formed at least of two heavy chains and a number of intermediate and light chains. Associates with tubulin. Interacts with microtubule. In terms of processing, ubiquitinated. Ubiquitination leads to its degradation through the 26S proteasome. Ubiquitin-proteasome-mediated DNAI7 degradation occurs in mitosis.

It is found in the cell projection. Its subcellular location is the cilium. The protein resides in the cytoplasm. In terms of biological role, via its association with the multisubunit axonemal dynein complex, is potentially involved in the regulation of cilia function. May act as a cell cycle regulator. This chain is Dynein axonemal intermediate chain 7, found in Bos taurus (Bovine).